The sequence spans 149 residues: MVDDAGAAEVLGDEWRPAWSLDRLLRAPLPPPRIRTRPWWFPVQELRDPLVFYLEAWLADAIFGPDRAIIPEIEWMSQVLLTVDVVNSGDLVEISIFGWPRVQNRVKSVLLSLASWHRKHRARAEKMKQLEEFLKTGGTGPQTPEHPVA.

In terms of domain architecture, KH; atypical spans 49 to 110 (PLVFYLEAWL…RVQNRVKSVL (62 aa)).

This sequence belongs to the KHDC1 family. In terms of assembly, component of the subcortical maternal complex (SCMC), at least composed of NLRP5, KHDC3, OOEP, and TLE6. Within the complex, interacts with NLRP5, KHDC3 and TLE6. As part of the SCMC interacts with the SCMC-associated protein NLRP4F. The SCMC may facilitate translocation of its components between the nuclear and cytoplasmic compartments. Forms a scaffold complex with KHDC3/FILIA, and interacts with BLM and TRIM25 at DNA replication forks.

It is found in the cytoplasm. Its subcellular location is the nucleus. In terms of biological role, component of the subcortical maternal complex (SCMC), a multiprotein complex that plays a key role in early embryonic development. The SCMC complex is a structural constituent of cytoplasmic lattices, which consist in fibrous structures found in the cytoplasm of oocytes and preimplantation embryos. They are required to store maternal proteins critical for embryonic development, such as proteins that control epigenetic reprogramming of the preimplantation embryo, and prevent their degradation or activation. As part of the OOEP-KHDC3 scaffold, recruits BLM and TRIM25 to DNA replication forks, thereby promoting the ubiquitination of BLM by TRIM25, enhancing BLM retainment at replication forks and therefore promoting stalled replication fork restart. Positively regulates the homologous recombination-mediated DNA double-strand break (DSB) repair pathway by regulating ATM activation and RAD51 recruitment to DSBs in oocytes. Thereby contributes to oocyte survival and the resumption and completion of meiosis. The polypeptide is Oocyte-expressed protein (OOEP) (Canis lupus familiaris (Dog)).